The chain runs to 273 residues: ATP synthase subunit delta (273 aa).

Belongs to the ATPase delta chain family. F-type ATPases have 2 components, F(1) - the catalytic core - and F(0) - the membrane proton channel. F(1) has five subunits: alpha(3), beta(3), gamma(1), delta(1), epsilon(1). F(0) has three main subunits: a(1), b(2) and c(10-14). The alpha and beta chains form an alternating ring which encloses part of the gamma chain. F(1) is attached to F(0) by a central stalk formed by the gamma and epsilon chains, while a peripheral stalk is formed by the delta and b chains.

It is found in the cell membrane. In terms of biological role, f(1)F(0) ATP synthase produces ATP from ADP in the presence of a proton or sodium gradient. F-type ATPases consist of two structural domains, F(1) containing the extramembraneous catalytic core and F(0) containing the membrane proton channel, linked together by a central stalk and a peripheral stalk. During catalysis, ATP synthesis in the catalytic domain of F(1) is coupled via a rotary mechanism of the central stalk subunits to proton translocation. Functionally, this protein is part of the stalk that links CF(0) to CF(1). It either transmits conformational changes from CF(0) to CF(1) or is implicated in proton conduction. In Corynebacterium diphtheriae (strain ATCC 700971 / NCTC 13129 / Biotype gravis), this protein is ATP synthase subunit delta.